A 636-amino-acid polypeptide reads, in one-letter code: MGKIIGIDLGTTNSCVAVLDGDKPRVIENAEGERTTPSVIAYTDGETLVGQPAKRQAVTNPENTLFAIKRLIGRRFEDEEVQRDIEIMPYKIVKADNGDAWVEAKGQKMAAPQVSAEVLKKMKKTAEDFLGEEVTGAVITVPAYFNDAQRQATKDAGRIAGLEVKRIINEPTAAALAYGLDKQGGDRTIAVYDLGGGTFDISIIEIDEVEGEKTFEVLATNGDTHLGGEDFDNRLINYLVAEFKKDQGIDLKNDPLAMQRVKEAAEKAKIELSSTNQTDVNLPYITADATGPKHMNIKVTRAKLESLVEDLVQRSLEPLKVALADADLSVGDITDVILVGGQTRMPMVQAKVTEFFGKEPRRDVNPDEAVAVGAAVQGGVLAGDVKDVLLLDVTPLSLGIETMGGVMTKLVEKNTTIPTKANQVFSTAEDNQSAVTIHVLQGERKQAMYNKSLGQFNLEGINPAPRGMPQIEVTFDLDADGILHVSAKDKQTGKEQKITIQASGGLSDAEIEKMVQEAEANKEADKKFEELATARNQADQIIHGTRKQVEEAGEALPADEKAKIETAISELEEARKGEDKEAIEAKIQALMAAAQKLMEIAQQQAQAQQGSAEAGAQSQEDDVVDAEFEEVKDDKK.

Thr-198 bears the Phosphothreonine; by autocatalysis mark. The tract at residues Ile-600–Lys-636 is disordered. The span at Ala-601–Ser-618 shows a compositional bias: low complexity. Positions Gln-619–Lys-636 are enriched in acidic residues.

Belongs to the heat shock protein 70 family.

Functionally, acts as a chaperone. This is Chaperone protein DnaK from Vibrio vulnificus (strain CMCP6).